Here is a 313-residue protein sequence, read N- to C-terminus: tRNA-cytidine(32) 2-sulfurtransferase (313 aa).

Positions Ser47–Ser52 match the PP-loop motif motif. Positions 122, 125, and 213 each coordinate [4Fe-4S] cluster.

It belongs to the TtcA family. In terms of assembly, homodimer. It depends on Mg(2+) as a cofactor. [4Fe-4S] cluster is required as a cofactor.

The protein resides in the cytoplasm. It catalyses the reaction cytidine(32) in tRNA + S-sulfanyl-L-cysteinyl-[cysteine desulfurase] + AH2 + ATP = 2-thiocytidine(32) in tRNA + L-cysteinyl-[cysteine desulfurase] + A + AMP + diphosphate + H(+). It participates in tRNA modification. Its function is as follows. Catalyzes the ATP-dependent 2-thiolation of cytidine in position 32 of tRNA, to form 2-thiocytidine (s(2)C32). The sulfur atoms are provided by the cysteine/cysteine desulfurase (IscS) system. This Yersinia pseudotuberculosis serotype IB (strain PB1/+) protein is tRNA-cytidine(32) 2-sulfurtransferase.